The chain runs to 493 residues: Neuronal acetylcholine receptor subunit alpha-6 (493 aa).

An N-terminal signal peptide occupies residues 1-30; it reads MLNGWGRGDLRSGLCLWICGFLAFFKGSRG. Over 31–240 the chain is Extracellular; sequence CVSEEQLFHT…TYSFYIRRLP (210 aa). N-linked (GlcNAc...) asparagine glycans are attached at residues Asn-54 and Asn-171. 2 disulfide bridges follow: Cys-158–Cys-172 and Cys-222–Cys-223. 3 helical membrane-spanning segments follow: residues 241 to 265, 272 to 290, and 306 to 327; these read MFYTINLIIPCLFISFLTVLVFYLP, VTLCISVLLSLTVFLLVIT, and YLLFTMIFVTLSIVVTVFVLNI. Residues 328 to 464 are Cytoplasmic-facing; that stretch reads HYRTPATHTM…WKYMAMVVDR (137 aa). Ser-401 is subject to Phosphoserine. A helical membrane pass occupies residues 465–484; the sequence is VFLWVFIIVCVFGTVGLFLQ.

The protein belongs to the ligand-gated ion channel (TC 1.A.9) family. Acetylcholine receptor (TC 1.A.9.1) subfamily. Alpha-6/CHRNA6 sub-subfamily. As to quaternary structure, neuronal AChR is composed of two different types of subunits: alpha and non-alpha (beta). CHRNA6/alpha-6 subunit can be combined to CHRNB2/beta-2 and CHRNA4/alpha-4 to give rise to functional receptors. Interacts with LYPD6. As to expression, predominantly expressed in only a few brain areas, including dopaminergic neurons, norepirephrine neurons and cells of the visual system.

It is found in the synaptic cell membrane. It carries out the reaction Ca(2+)(in) = Ca(2+)(out). The enzyme catalyses K(+)(in) = K(+)(out). The catalysed reaction is Na(+)(in) = Na(+)(out). Activated by a myriad of ligands such as acetylcholine, cytisine and nicotine. CHRNA6 nAChR activity is inhibited by the antagonists alpha-conotoxin MII and PIA, a small disulfide-constrained peptides from cone snails. In terms of biological role, component of neuronal acetylcholine receptors (nAChRs) that function as pentameric, ligand-gated cation channels with high calcium permeability among other activities. nAChRs are excitatory neurotrasnmitter receptors formed by a collection of nAChR subunits known to mediate synaptic transmission in the nervous system and the neuromuscular junction. Each nAchR subunit confers differential attributes to channel properties, including activation, deactivation and desensitization kinetics, pH sensitivity, cation permeability, and binding to allosteric modulators. CHRNA6 forms pentameric channels with CHRNB2 and CHRNA4 that exhibit high sensitivity to ACh and nicotine and are predominantly expressed in only a few brain areas, including dopaminergic neurons, norepirephrine neurons and cells of the visual system. nAChrs containing CHRNA6 subunits mediate endogenous cholinergic modulation of dopamine and gamma-aminobutyric acid (GABA) release in response to nicotine at nerve terminals. This is Neuronal acetylcholine receptor subunit alpha-6 (Chrna6) from Rattus norvegicus (Rat).